A 55-amino-acid chain; its full sequence is uncharacterized protein (55 aa).

Residues 27 to 44 (SFWFILISASSFLIYSLF) form a helical membrane-spanning segment.

The protein resides in the membrane. This is an uncharacterized protein from Dictyostelium discoideum (Social amoeba).